Here is a 173-residue protein sequence, read N- to C-terminus: Archaemetzincin (173 aa).

Histidine 130 lines the Zn(2+) pocket. Glutamate 131 (proton acceptor) is an active-site residue. Zn(2+) contacts are provided by histidine 134, histidine 140, cysteine 141, cysteine 146, cysteine 165, and cysteine 168.

Belongs to the peptidase M54 family. In terms of assembly, monomer. The cofactor is Zn(2+).

In terms of biological role, probable zinc metalloprotease whose natural substrate is unknown. The chain is Archaemetzincin from Halobacterium salinarum (strain ATCC 29341 / DSM 671 / R1).